A 266-amino-acid chain; its full sequence is Glucosamine-6-phosphate deaminase (266 aa).

Asp72 (proton acceptor; for enolization step) is an active-site residue. Asp141 acts as the For ring-opening step in catalysis. His143 functions as the Proton acceptor; for ring-opening step in the catalytic mechanism. Glu148 (for ring-opening step) is an active-site residue.

Belongs to the glucosamine/galactosamine-6-phosphate isomerase family. NagB subfamily. As to quaternary structure, homohexamer.

It carries out the reaction alpha-D-glucosamine 6-phosphate + H2O = beta-D-fructose 6-phosphate + NH4(+). Its pathway is amino-sugar metabolism; N-acetylneuraminate degradation; D-fructose 6-phosphate from N-acetylneuraminate: step 5/5. Its activity is regulated as follows. Allosterically activated by N-acetylglucosamine 6-phosphate (GlcNAc6P). Catalyzes the reversible isomerization-deamination of glucosamine 6-phosphate (GlcN6P) to form fructose 6-phosphate (Fru6P) and ammonium ion. The protein is Glucosamine-6-phosphate deaminase of Salmonella typhi.